The primary structure comprises 319 residues: Pantothenate kinase (319 aa).

Residue 101 to 108 (GSVAVGKS) participates in ATP binding.

The protein belongs to the prokaryotic pantothenate kinase family.

It is found in the cytoplasm. The enzyme catalyses (R)-pantothenate + ATP = (R)-4'-phosphopantothenate + ADP + H(+). It participates in cofactor biosynthesis; coenzyme A biosynthesis; CoA from (R)-pantothenate: step 1/5. The protein is Pantothenate kinase of Clavibacter michiganensis subsp. michiganensis (strain NCPPB 382).